Consider the following 169-residue polypeptide: Caltractin (169 aa).

A disordered region spans residues 1–24 (MSYRKTVVSARRDQKKGRVGGLTE). EF-hand domains follow at residues 25-60 (EQKQEIREAFDLFDTDGSGTIDAKELKVAMRALGFE), 61-96 (PKKEEIKKMIADIDKAGSGTIDFEEFLQMMTSKMGE), 98-133 (DSREEIIKAFKLFDDDNTGFITLKNLKRVAKELGEN), and 134-169 (LTDEELQEMTDEADRNGDGQIDEDEFYRIMKKTSLF). Ca(2+)-binding residues include aspartate 38, aspartate 40, serine 42, threonine 44, and glutamate 49. Positions 147, 149, 151, 153, and 158 each coordinate Ca(2+).

The protein belongs to the centrin family.

Functionally, this calcium-binding protein is found in the basal body complexes (the functional homolog of the centrosome in animal cell). In mitotic cells it is specifically associated with the poles of the mitotic spindles at the sites of the duplicated basal body complexes. In Dunaliella salina (Green alga), this protein is Caltractin.